The primary structure comprises 472 residues: MKIKTRFAPSPTGYLHVGGARTALYSWLFARNHGGEFVLRIEDTDLERSTPEAIEAIMDGMNWLNLQWDEGPYYQTKRFDRYNNVIDEMLEAGTAYKCYCSKERLEALREEQMANGEKPRYDGRCRHSHEHHADDEPCVVRFANPQEGSVIFDDQIRGPIEFSNQELDDLIIRRTDGSPTYNFCVVVDDWDMAITHVIRGEDHINNTPRQINILKALNAPVPVYAHVSMINGDDGKKLSKRHGAVSVMQYRDDGYLPEALLNYLVRLGWSHGDQEIFTREEMIEFFSLGAVSKSASAFNTDKLLWLNHHYINTLPAEYVATHLQWHIEQENIDTRNGPQLAELVKLLGERCKTLKEIAQSCRYFYEEFAEFDADAAKKHLRPVARQPLEVVRDKLAAIVDWTAENVHHAIQATADELEVGMGKVAMPLRVAVTGAGQSRALDVTVHAIGKSRSVERINKALAFIAEREGQAS.

The 'HIGH' region signature appears at 9–19; the sequence is PSPTGYLHVGG. C98, C100, C125, and H127 together coordinate Zn(2+). Positions 237–241 match the 'KMSKS' region motif; that stretch reads KLSKR. An ATP-binding site is contributed by K240.

This sequence belongs to the class-I aminoacyl-tRNA synthetase family. Glutamate--tRNA ligase type 1 subfamily. As to quaternary structure, monomer. Requires Zn(2+) as cofactor.

It localises to the cytoplasm. The catalysed reaction is tRNA(Glu) + L-glutamate + ATP = L-glutamyl-tRNA(Glu) + AMP + diphosphate. In terms of biological role, catalyzes the attachment of glutamate to tRNA(Glu) in a two-step reaction: glutamate is first activated by ATP to form Glu-AMP and then transferred to the acceptor end of tRNA(Glu). The sequence is that of Glutamate--tRNA ligase from Klebsiella pneumoniae (strain 342).